The following is a 384-amino-acid chain: uncharacterized protein (384 aa).

Disordered stretches follow at residues 133-257 (RQNS…TNQD) and 297-368 (ERTP…STAT). Residues 143 to 157 (PSTSSEPEPQPSTSS) show a composition bias toward low complexity. The segment covering 302–315 (DQTDITDDSADWSE) has biased composition (acidic residues). Residues 316 to 342 (GETRRPSHSEVGERRLSRENNSEDPNR) are compositionally biased toward basic and acidic residues. The segment covering 343–363 (SRSRSRSRERRRRRPRVRPGR) has biased composition (basic residues).

This is an uncharacterized protein from Gallid herpesvirus 2 (strain Chicken/Md5/ATCC VR-987) (GaHV-2).